We begin with the raw amino-acid sequence, 167 residues long: Interferon gamma (167 aa).

The first 23 residues, 1 to 23, serve as a signal peptide directing secretion; the sequence is MSYTSYILAFQLCLILGSYGCYC. Residue Gln24 is modified to Pyrrolidone carboxylic acid. N-linked (GlcNAc...) asparagine glycans are attached at residues Asn41, Asn108, and Asn117.

The protein belongs to the type II (or gamma) interferon family. In terms of assembly, homodimer. Interacts with IFNGR1 (via extracellular domain); this interaction promotes IFNGR1 dimerization. As to expression, released primarily from activated T lymphocytes.

The protein resides in the secreted. In terms of biological role, type II interferon produced by immune cells such as T-cells and NK cells that plays crucial roles in antimicrobial, antiviral, and antitumor responses by activating effector immune cells and enhancing antigen presentation. Primarily signals through the JAK-STAT pathway after interaction with its receptor IFNGR1 to affect gene regulation. Upon IFNG binding, IFNGR1 intracellular domain opens out to allow association of downstream signaling components JAK2, JAK1 and STAT1, leading to STAT1 activation, nuclear translocation and transcription of IFNG-regulated genes. Many of the induced genes are transcription factors such as IRF1 that are able to further drive regulation of a next wave of transcription. Plays a role in class I antigen presentation pathway by inducing a replacement of catalytic proteasome subunits with immunoproteasome subunits. In turn, increases the quantity, quality, and repertoire of peptides for class I MHC loading. Increases the efficiency of peptide generation also by inducing the expression of activator PA28 that associates with the proteasome and alters its proteolytic cleavage preference. Up-regulates as well MHC II complexes on the cell surface by promoting expression of several key molecules such as cathepsins B/CTSB, H/CTSH, and L/CTSL. Participates in the regulation of hematopoietic stem cells during development and under homeostatic conditions by affecting their development, quiescence, and differentiation. This chain is Interferon gamma (IFNG), found in Oryctolagus cuniculus (Rabbit).